We begin with the raw amino-acid sequence, 272 residues long: Leucoagglutinating phytohemagglutinin (272 aa).

An N-terminal signal peptide occupies residues 1–20 (MASSKFFTVLFLVLLTHANS). N-linked (GlcNAc...) (high mannose) asparagine glycosylation is present at asparagine 32. An N-linked (GlcNAc...) (complex) asparagine glycan is attached at asparagine 80.

This sequence belongs to the leguminous lectin family. In terms of assembly, homotetramer. In terms of processing, N-glycosylated on Asn-80; contains xylose.

This insecticidal carbohydrate-binding lectin is toxic for the cowpea weevil. The chain is Leucoagglutinating phytohemagglutinin (DLEC2) from Phaseolus vulgaris (Kidney bean).